The sequence spans 1775 residues: Atrochrysone carboxylic acid synthase (1775 aa).

Residues 35-262 (LRRLQALSKD…YAKWASLPIF (228 aa)) enclose the Starter acyltransferase (SAT) domain. Residues 400-833 (DSKIAIVGMS…GGNTTMLLEE (434 aa)) enclose the Ketosynthase family 3 (KS3) domain. Active-site for beta-ketoacyl synthase activity residues include C573, H708, and H750. Positions 934–1244 (FAFTGQGAFY…ENNWNTLADS (311 aa)) constitute a Malonyl-CoA:ACP transacylase (MAT) domain. The product template (PT) domain stretch occupies residues 1313–1631 (TSSIHQVLQE…RSLLPTFFSP (319 aa)). The interval 1317–1451 (HQVLQEDVTG…SAVVEYGDAN (135 aa)) is N-terminal hotdog fold. Residues 1317–1626 (HQVLQEDVTG…FRRFPRSLLP (310 aa)) enclose the PKS/mFAS DH domain. The Proton acceptor; for dehydratase activity role is filled by H1349. Positions 1480-1626 (AAVLPRNMAY…FRRFPRSLLP (147 aa)) are C-terminal hotdog fold. D1537 (proton donor; for dehydratase activity) is an active-site residue. The tract at residues 1671–1697 (TAAPVPAPAPVPAKRAEPAPAAAQAAA) is disordered. The span at 1688 to 1697 (PAPAAAQAAA) shows a compositional bias: low complexity. Positions 1697–1774 (ATQNPTITGA…ELKTYIEETF (78 aa)) constitute a Carrier domain. S1734 is modified (O-(pantetheine 4'-phosphoryl)serine).

It catalyses the reaction holo-[ACP] + 8 malonyl-CoA + 8 H(+) = atrochrysone carboxyl-[ACP] + 8 CO2 + 8 CoA + 2 H2O. Its pathway is secondary metabolite biosynthesis. In terms of biological role, non-reducing polyketide synthase; part of the gene cluster that mediates the biosynthesis of physcion, a natural anthraquinone fungicide that can prevent plant fungal infections. The pathway begins with the polyketide synthase AcPKS that condenses 8 malonyl-CoA units to synthesize atrochrysone thioester which is released from the synthase by the atrochrysone carboxyl ACP thioesterase AcTE that breaks the thioester bond and leads to free atrochrysone carboxylic acid. Spontaneous decarboxylation of atrochrysone carboxylic acid leads to the formation of atrochrysone. Then, atrochrysone undergoes spontaneous dehydration and oxidation, giving the products emodin anthrone and emodin. The O-methyltransferase AcOMT then methylates the C-6 hydroxyl of emodin to form physcion. The protein is Atrochrysone carboxylic acid synthase of Aspergillus chevalieri (Eurotium chevalieri).